A 148-amino-acid chain; its full sequence is UPF0756 membrane protein KPK_3307 (148 aa).

The next 4 helical transmembrane spans lie at 14-34 (ALGF…LIIV), 51-71 (LTVG…SGTL), 86-106 (LLAI…VSLM), and 121-141 (VLGV…AGII).

It belongs to the UPF0756 family.

Its subcellular location is the cell membrane. This Klebsiella pneumoniae (strain 342) protein is UPF0756 membrane protein KPK_3307.